Consider the following 235-residue polypeptide: Iron-sulfur cluster co-chaperone protein HscB (235 aa).

The a divalent metal cation site is built by cysteine 41, cysteine 44, cysteine 58, and cysteine 61. The J domain occupies 72–144 (DYFSLMDCNR…LSRGLYLLKL (73 aa)).

Belongs to the HscB family. In terms of assembly, interacts with ISCU and HSPA9 to form an iron-sulfur transfer complex. Interacts with SDHAF1 (via the first LYR motif); the interaction recruits the iron-sulfur transfer complex composed of HSC20, HSPA9 and ISCU and mediates the incorporation of iron-sulfur clusters into SDHB which also interacts with HSC20. Interacts with the cytoplasmic form of ISCU and with CIA complex member CIAO1 (via LYR motif). As to quaternary structure, homodimer. Interacts with ISCU (cytoplasmic form); this interaction stabilizes the (Fe-S) clusters on ISCU. Interacts with the CIA complex member CIAO1 (via LYR motif). In terms of tissue distribution, expressed in lung, brain, stomach, spleen, ovary, testis, liver, muscle and heart.

Its subcellular location is the cytoplasm. It localises to the mitochondrion. Its pathway is cofactor biosynthesis; iron-sulfur cluster biosynthesis. In terms of biological role, acts as a co-chaperone in iron-sulfur cluster assembly in mitochondria. Required for incorporation of iron-sulfur clusters into SDHB, the iron-sulfur protein subunit of succinate dehydrogenase that is involved in complex II of the mitochondrial electron transport chain. Recruited to SDHB by interaction with SDHAF1 which first binds SDHB and then recruits the iron-sulfur transfer complex formed by HSC20, HSPA9 and ISCU through direct binding to HSC20. Plays an essential role in hematopoiesis. Acts as a co-chaperone in iron-sulfur cluster assembly in the cytoplasm. Also mediates complex formation between components of the cytosolic iron-sulfur biogenesis pathway and the CIA targeting complex composed of CIAO1, DIPK1B/FAM69B and MMS19 by binding directly to the scaffold protein ISCU and to CIAO1. This facilitates iron-sulfur cluster insertion into a number of cytoplasmic and nuclear proteins including POLD1, ELP3, DPYD and PPAT. The sequence is that of Iron-sulfur cluster co-chaperone protein HscB from Homo sapiens (Human).